Consider the following 67-residue polypeptide: Phycobilisome 7.8 kDa linker polypeptide, allophycocyanin-associated, core (67 aa).

Residues 1–56 (MRMFKITACVPSQTRIRTQRELQNTYFTKLVPYENWFREQQRIQKMGGKIVKVELF) enclose the CpcD-like domain.

The protein belongs to the phycobilisome linker protein family.

It is found in the cellular thylakoid membrane. Rod linker protein, associated with allophycocyanin. Linker polypeptides determine the state of aggregation and the location of the disk-shaped phycobiliprotein units within the phycobilisome and modulate their spectroscopic properties in order to mediate a directed and optimal energy transfer. The protein is Phycobilisome 7.8 kDa linker polypeptide, allophycocyanin-associated, core (apcC) of Thermosynechococcus vestitus (strain NIES-2133 / IAM M-273 / BP-1).